A 20-amino-acid chain; its full sequence is Large ribosomal subunit protein uL10 (20 aa).

Belongs to the universal ribosomal protein uL10 family. In terms of assembly, part of the ribosomal stalk of the 50S ribosomal subunit. The N-terminus interacts with L11 and the large rRNA to form the base of the stalk. The C-terminus forms an elongated spine to which L12 dimers bind in a sequential fashion forming a multimeric L10(L12)X complex.

Forms part of the ribosomal stalk, playing a central role in the interaction of the ribosome with GTP-bound translation factors. In Citrobacter freundii, this protein is Large ribosomal subunit protein uL10 (rplJ).